A 92-amino-acid polypeptide reads, in one-letter code: Large ribosomal subunit protein bL27 (92 aa).

The propeptide occupies 1–9 (MLKLNLQFF). The segment at 14–34 (GVGSTKNGRDSQSKRLGAKRA) is disordered.

The protein belongs to the bacterial ribosomal protein bL27 family. The N-terminus is cleaved by ribosomal processing cysteine protease Prp.

In Exiguobacterium sibiricum (strain DSM 17290 / CCUG 55495 / CIP 109462 / JCM 13490 / 255-15), this protein is Large ribosomal subunit protein bL27.